Reading from the N-terminus, the 530-residue chain is Potassium voltage-gated channel subfamily A member 6 (530 aa).

The tract at residues 1-35 is disordered; the sequence is MRSEKSLTLAAPGEVRGPEGEQQDAGEFQEAEGGG. S3 is modified (phosphoserine). The span at 21–30 shows a compositional bias: acidic residues; that stretch reads EQQDAGEFQE. A helical membrane pass occupies residues 172–193; the sequence is PARGIAIVSVLVILISIVIFCL. The interval 203–239 is disordered; that stretch reads GRGGSNEGSGTRMSPASRGSHEEEDEDEDSYAFPGSI. S222 is subject to Phosphoserine; by CK2. The chain crosses the membrane as a helical span at residues 264–285; the sequence is FFLVETLCIVWFTFELLVRFSA. A lipid anchor (S-palmitoyl cysteine) is attached at C286. A helical membrane pass occupies residues 297–317; it reads MNIIDLVAIFPYFITLGTELV. Residues 339-359 form a helical; Voltage-sensor membrane-spanning segment; that stretch reads LAILRVIRLVRVFRIFKLSRH. Residues 361–374 form an S4-S5 linker region; the sequence is KGLQILGKTLQASM. The chain crosses the membrane as a helical span at residues 375–396; it reads RELGLLIFFLFIGVILFSSAVY. Positions 411-422 form an intramembrane region, helical; that stretch reads PDAFWWAVVTMT. Positions 423–428 match the Selectivity filter motif; sequence TVGYGD. Residues 423-430 lie within the membrane without spanning it; that stretch reads TVGYGDMY. Residues 438–466 traverse the membrane as a helical segment; sequence IVGSLCAIAGVLTIALPVPVIVSNFNYFY. The residue at position 512 (S512) is a Phosphoserine; by PKA. A PDZ-binding motif is present at residues 527–529; it reads LTE. Position 528 is a phosphothreonine; by PKA (T528).

The protein belongs to the potassium channel family. A (Shaker) (TC 1.A.1.2) subfamily. Kv1.6/KCNA6 sub-subfamily. Homotetramer and heterotetramer of potassium channel proteins. Interacts with KCNAB1 and KCNAB2.

The protein resides in the cell membrane. The enzyme catalyses K(+)(in) = K(+)(out). In terms of biological role, voltage-gated potassium channel that mediates transmembrane potassium transport in excitable membranes. Forms tetrameric potassium-selective channels through which potassium ions pass in accordance with their electrochemical gradient. The channel alternates between opened and closed conformations in response to the voltage difference across the membrane. Can form functional homotetrameric channels and heterotetrameric channels that contain variable proportions of KCNA1, KCNA2, KCNA4, KNCA5, KCNA6, and possibly other family members as well; channel properties depend on the type of alpha subunits that are part of the channel. Channel properties are modulated by cytoplasmic beta subunits that regulate the subcellular location of the alpha subunits and promote rapid inactivation. Homotetrameric channels display rapid activation and slow inactivation. The chain is Potassium voltage-gated channel subfamily A member 6 (Kcna6) from Rattus norvegicus (Rat).